The following is a 213-amino-acid chain: EEF1A lysine methyltransferase 1 (213 aa).

The protein belongs to the class I-like SAM-binding methyltransferase superfamily. EFM5 family.

Its subcellular location is the cytoplasm. It carries out the reaction L-lysyl-[protein] + 3 S-adenosyl-L-methionine = N(6),N(6),N(6)-trimethyl-L-lysyl-[protein] + 3 S-adenosyl-L-homocysteine + 3 H(+). Its function is as follows. Protein-lysine methyltransferase that selectively catalyzes the trimethylation of EEF1A at 'Lys-79'. In Gallus gallus (Chicken), this protein is EEF1A lysine methyltransferase 1.